The following is a 96-amino-acid chain: Small ribosomal subunit protein bS6 (96 aa).

It belongs to the bacterial ribosomal protein bS6 family.

Binds together with bS18 to 16S ribosomal RNA. The protein is Small ribosomal subunit protein bS6 of Cutibacterium acnes (strain DSM 16379 / KPA171202) (Propionibacterium acnes).